Reading from the N-terminus, the 710-residue chain is Early transcription factor 82 kDa subunit (710 aa).

Belongs to the poxviridae VETF large subunit family. As to quaternary structure, heterodimer of a 70 kDa and a 82 kDa subunit. Part of the early transcription complex composed of ETF, RAP94/OPG109, and the DNA-directed RNA polymerase.

The protein resides in the virion. Functionally, acts with RNA polymerase to initiate transcription from early gene promoters. Is recruited by the RPO-associated protein of 94 kDa RAP94/OPG109 to form the early transcription complex, which also contains the core RNA polymerase. ETF heterodimer binds to early gene promoters. The sequence is that of Early transcription factor 82 kDa subunit (OPG133) from Vaccinia virus (strain Ankara) (VACV).